A 266-amino-acid chain; its full sequence is Pyridoxal phosphate phosphatase YigL (266 aa).

Asp-8 functions as the Nucleophile in the catalytic mechanism. Asp-8 is a Mg(2+) binding site. Leu-9 is a phosphate binding site. Asp-10 contacts Mg(2+). Phosphate-binding positions include 42–43 (TG) and Lys-191. Mg(2+) is bound at residue Asp-214. Asn-217 contributes to the phosphate binding site.

Belongs to the HAD-like hydrolase superfamily. Cof family. Mg(2+) serves as cofactor. Mn(2+) is required as a cofactor. The cofactor is Co(2+). It depends on Zn(2+) as a cofactor.

It carries out the reaction pyridoxal 5'-phosphate + H2O = pyridoxal + phosphate. The catalysed reaction is sugar phosphate + H2O = sugar + phosphate.. Its function is as follows. Catalyzes the dephosphorylation of pyridoxal-phosphate (PLP) and sugar phosphate. The polypeptide is Pyridoxal phosphate phosphatase YigL (yigL) (Escherichia coli O157:H7).